A 336-amino-acid chain; its full sequence is UPF0324 membrane protein BR0028/BS1330_I0028 (336 aa).

Helical transmembrane passes span isoleucine 9–leucine 26, arginine 36–leucine 55, phenylalanine 68–valine 90, glycine 94–glycine 116, leucine 128–alanine 150, alanine 160–leucine 182, isoleucine 189–leucine 211, leucine 221–asparagine 240, proline 247–leucine 269, alanine 279–isoleucine 301, and leucine 313–valine 335.

This sequence belongs to the UPF0324 family.

The protein localises to the cell membrane. The sequence is that of UPF0324 membrane protein BR0028/BS1330_I0028 from Brucella suis biovar 1 (strain 1330).